We begin with the raw amino-acid sequence, 213 residues long: ATP phosphoribosyltransferase (213 aa).

The protein belongs to the ATP phosphoribosyltransferase family. Short subfamily. Heteromultimer composed of HisG and HisZ subunits.

It is found in the cytoplasm. It carries out the reaction 1-(5-phospho-beta-D-ribosyl)-ATP + diphosphate = 5-phospho-alpha-D-ribose 1-diphosphate + ATP. It participates in amino-acid biosynthesis; L-histidine biosynthesis; L-histidine from 5-phospho-alpha-D-ribose 1-diphosphate: step 1/9. Catalyzes the condensation of ATP and 5-phosphoribose 1-diphosphate to form N'-(5'-phosphoribosyl)-ATP (PR-ATP). Has a crucial role in the pathway because the rate of histidine biosynthesis seems to be controlled primarily by regulation of HisG enzymatic activity. In Teredinibacter turnerae (strain ATCC 39867 / T7901), this protein is ATP phosphoribosyltransferase.